We begin with the raw amino-acid sequence, 441 residues long: Probable pyridine nucleotide-disulfide oxidoreductase RclA (441 aa).

An FAD-binding site is contributed by 33-43 (EQSNAMYGGTC). Cysteine 43 and cysteine 48 are oxidised to a cystine. Histidine 426 (proton acceptor) is an active-site residue.

Belongs to the class-I pyridine nucleotide-disulfide oxidoreductase family. FAD is required as a cofactor.

Probably involved in reactive chlorine species (RCS) stress resistance. This is Probable pyridine nucleotide-disulfide oxidoreductase RclA (rclA) from Escherichia coli (strain K12).